Consider the following 137-residue polypeptide: uncharacterized protein (137 aa).

Residues 1–26 (MKDKMWCEDTAQPHRRLPAPPSSSSP) are disordered.

This is an uncharacterized protein from Homo sapiens (Human).